A 208-amino-acid polypeptide reads, in one-letter code: Uracil phosphoribosyltransferase (208 aa).

Residues Arg-78, Arg-103, and 130-138 contribute to the 5-phospho-alpha-D-ribose 1-diphosphate site; that span reads DPMLATGGS. Residues Ile-193 and 198 to 200 contribute to the uracil site; that span reads GDA. Asp-199 provides a ligand contact to 5-phospho-alpha-D-ribose 1-diphosphate.

It belongs to the UPRTase family. Mg(2+) serves as cofactor.

The catalysed reaction is UMP + diphosphate = 5-phospho-alpha-D-ribose 1-diphosphate + uracil. It functions in the pathway pyrimidine metabolism; UMP biosynthesis via salvage pathway; UMP from uracil: step 1/1. Allosterically activated by GTP. Catalyzes the conversion of uracil and 5-phospho-alpha-D-ribose 1-diphosphate (PRPP) to UMP and diphosphate. This chain is Uracil phosphoribosyltransferase, found in Haemophilus ducreyi (strain 35000HP / ATCC 700724).